A 423-amino-acid polypeptide reads, in one-letter code: MQNNYLSQLRFSDLPLHHQVLAALQEKGFDYCTPIQALSLPMSLAGKDVAGQAQTGTGKTMAFLTATFHHLLTQQGDKGGRQPRALILAPTRELAVQINNDAALLTKATGLKTGLAYGGDGYEKQLKAIEQGVDILIGTTGRVIDYVKQGIVRLDKIQVVVLDEADRMFDLGFIKDIRYLLRKCPAPQHRLTMLFSATLSYKVRELAFEDMNDPEYVEIEPLQKTGHRIKEELFYPSNQDKMALLLTLLEEEWPERCIIFANTKHRCEDIWGYLAADGHRVGLLTGDVAQKKRLSLLKQFTEGHLDILVATDVAARGLHISDVSHVFNYDLPDDREDYVHRIGRTGRAGESGVSISFACEEYAMNLPAIEEYISHSIPVSQYDVAALLTLPKPYRIKRGNNNSKNSANSNRTFQKKRSLKRNF.

The short motif at 9–37 (LRFSDLPLHHQVLAALQEKGFDYCTPIQA) is the Q motif element. Residues 40 to 217 (LPMSLAGKDV…FEDMNDPEYV (178 aa)) form the Helicase ATP-binding domain. Residue 53–60 (AQTGTGKT) participates in ATP binding. The short motif at 163–166 (DEAD) is the DEAD box element. One can recognise a Helicase C-terminal domain in the interval 241 to 388 (KMALLLTLLE…VSQYDVAALL (148 aa)). The segment at 397–423 (KRGNNNSKNSANSNRTFQKKRSLKRNF) is disordered. A compositionally biased stretch (low complexity) spans 400 to 410 (NNNSKNSANSN). Positions 413 to 423 (FQKKRSLKRNF) are enriched in basic residues.

It belongs to the DEAD box helicase family. RhlB subfamily. As to quaternary structure, component of the RNA degradosome, which is a multiprotein complex involved in RNA processing and mRNA degradation.

It localises to the cytoplasm. The enzyme catalyses ATP + H2O = ADP + phosphate + H(+). Its function is as follows. DEAD-box RNA helicase involved in RNA degradation. Has RNA-dependent ATPase activity and unwinds double-stranded RNA. The chain is ATP-dependent RNA helicase RhlB from Pasteurella multocida (strain Pm70).